Here is a 445-residue protein sequence, read N- to C-terminus: MKITSVKNEKELVSFEIDLSEKKWNEFLDKEILKASKNLKMPGYRPGKVPLEIAKKNINMPVCFVNALSSARERIEDWIIDQDEFKKMADEICDFDPVTSKPNNSNNVLNKTVSFTMSFGKYPEFKVKNVKDIKIEKIESKVNKQMVDQAIEKELAKNETMSVKERAAKLNDIVIIDFKGYVDNVAFEGGEAKNYELKLGSKSFIDNFEEQLVGLKAGDKKDVNVTFPKDYHVANLKGKKAKFEVTVHVVNEVETPKLDDEFVKSLNLKNVNTVAEYKKHLEAELQKQLDGTVDNQIQSALYTELNKMVPSDLKIHEGLVNNVAEIFISRLMISLIGKVVNIDEFVKMIDGGRGALTKEKLIEEEKNQAREYLKVKFALKQYSKVEKISVSNEDIEKEIKEIAANSNTKEKEIKEDFAVYSSIKREALDKKVFEYLKNQVAKAAK.

The PPIase FKBP-type domain maps to 171–256 (NDIVIIDFKG…VHVVNEVETP (86 aa)).

Belongs to the FKBP-type PPIase family. Tig subfamily.

Its subcellular location is the cytoplasm. The catalysed reaction is [protein]-peptidylproline (omega=180) = [protein]-peptidylproline (omega=0). In terms of biological role, involved in protein export. Acts as a chaperone by maintaining the newly synthesized protein in an open conformation. Functions as a peptidyl-prolyl cis-trans isomerase. This chain is Trigger factor, found in Malacoplasma penetrans (strain HF-2) (Mycoplasma penetrans).